The following is a 404-amino-acid chain: Probable tRNA sulfurtransferase (404 aa).

The THUMP domain occupies 60–165 (QPVVEALKLV…DEAAYISYEE (106 aa)). ATP-binding positions include 183 to 184 (ML), 208 to 209 (HF), Arg-265, Gly-287, and Gln-296.

The protein belongs to the ThiI family.

Its subcellular location is the cytoplasm. The enzyme catalyses [ThiI sulfur-carrier protein]-S-sulfanyl-L-cysteine + a uridine in tRNA + 2 reduced [2Fe-2S]-[ferredoxin] + ATP + H(+) = [ThiI sulfur-carrier protein]-L-cysteine + a 4-thiouridine in tRNA + 2 oxidized [2Fe-2S]-[ferredoxin] + AMP + diphosphate. It catalyses the reaction [ThiS sulfur-carrier protein]-C-terminal Gly-Gly-AMP + S-sulfanyl-L-cysteinyl-[cysteine desulfurase] + AH2 = [ThiS sulfur-carrier protein]-C-terminal-Gly-aminoethanethioate + L-cysteinyl-[cysteine desulfurase] + A + AMP + 2 H(+). Its pathway is cofactor biosynthesis; thiamine diphosphate biosynthesis. Its function is as follows. Catalyzes the ATP-dependent transfer of a sulfur to tRNA to produce 4-thiouridine in position 8 of tRNAs, which functions as a near-UV photosensor. Also catalyzes the transfer of sulfur to the sulfur carrier protein ThiS, forming ThiS-thiocarboxylate. This is a step in the synthesis of thiazole, in the thiamine biosynthesis pathway. The sulfur is donated as persulfide by IscS. In Streptococcus pyogenes serotype M6 (strain ATCC BAA-946 / MGAS10394), this protein is Probable tRNA sulfurtransferase.